A 35-amino-acid polypeptide reads, in one-letter code: ECKYLWGTCEKDEHCCEHLGCNKKHGWCGWDGTFG.

3 disulfide bridges follow: Cys2–Cys16, Cys9–Cys21, and Cys15–Cys28.

Belongs to the neurotoxin 10 (Hwtx-1) family. 24 (Hwtx-6) subfamily. Expressed by the venom gland.

Its subcellular location is the secreted. In terms of biological role, gating-modifier toxin that dose-dependently inhibits inactivation of voltage-gated sodium channels and reduces the peak of sodium current in cockroach DUM neurons. In vivo, reversibly paralyzes cockroaches for several hours, paralyzes rat after intracerebroventricular injection and blocks the neuromuscular transmission of the isolated rat phrenic nerve-diaphragm preparation. The protein is U1-theraphotoxin-Hhn1a of Cyriopagopus hainanus (Chinese bird spider).